The chain runs to 235 residues: Phosphoribosylaminoimidazole-succinocarboxamide synthase (235 aa).

Belongs to the SAICAR synthetase family.

It catalyses the reaction 5-amino-1-(5-phospho-D-ribosyl)imidazole-4-carboxylate + L-aspartate + ATP = (2S)-2-[5-amino-1-(5-phospho-beta-D-ribosyl)imidazole-4-carboxamido]succinate + ADP + phosphate + 2 H(+). Its pathway is purine metabolism; IMP biosynthesis via de novo pathway; 5-amino-1-(5-phospho-D-ribosyl)imidazole-4-carboxamide from 5-amino-1-(5-phospho-D-ribosyl)imidazole-4-carboxylate: step 1/2. The sequence is that of Phosphoribosylaminoimidazole-succinocarboxamide synthase from Clostridium botulinum (strain Alaska E43 / Type E3).